We begin with the raw amino-acid sequence, 385 residues long: MNPVPAQREYFLDSIRAWLMLLGIPFHISLIYSSHTWHVNSAEPSLWLTLFNDFIHSFRMQVFFVISGYFSYMLFLRYPLKKWWKVRVERVGIPMLTAIPLLTLPQFIMLQYVKGKAESWPGLSLYDKYNTLAWELISHLWFLLVLVVMTTLCVWIFKRIRNNLENSDKTNKKFSMVKLSVIFLCLGIGYAVIRRTIFIVYPPILSNGMFNFIVMQTLFYLPFFILGALAFIFPHLKALFTTPSRGCTFAAALAFVAYLLNQRYGSGDAWMYETESVITMVLGLWMVNVVFSFGHRLLNFQSARVTYFVNASLFIYLVHHPLTLFFGAYITPHITSNWLGFLCGLIFVVGIAIILYEIHLRIPLLKFLFSGKPVVKRENDKAPAR.

The next 10 membrane-spanning stretches (helical) occupy residues 17 to 37 (AWLM…SHTW), 60 to 80 (MQVF…RYPL), 91 to 111 (VGIP…IMLQ), 137 to 157 (ISHL…VWIF), 173 to 193 (KFSM…YAVI), 212 to 232 (FIVM…LAFI), 239 to 259 (LFTT…VAYL), 274 to 294 (TESV…FSFG), 311 to 331 (ASLF…AYIT), and 338 to 358 (WLGF…LYEI).

This sequence belongs to the acyltransferase 3 family. OpgC subfamily.

The protein localises to the cell membrane. The protein operates within glycan metabolism; osmoregulated periplasmic glucan (OPG) biosynthesis. In terms of biological role, necessary for the succinyl substitution of periplasmic glucans. Could catalyze the transfer of succinyl residues from the cytoplasmic side of the membrane to the nascent glucan backbones on the periplasmic side of the membrane. This Escherichia coli O45:K1 (strain S88 / ExPEC) protein is Glucans biosynthesis protein C.